A 184-amino-acid polypeptide reads, in one-letter code: ATP synthase subunit b, chloroplastic (184 aa).

A helical transmembrane segment spans residues 26–48 (ILATNLINLSVVLGVLIFFGKGV).

The protein belongs to the ATPase B chain family. F-type ATPases have 2 components, F(1) - the catalytic core - and F(0) - the membrane proton channel. F(1) has five subunits: alpha(3), beta(3), gamma(1), delta(1), epsilon(1). F(0) has four main subunits: a(1), b(1), b'(1) and c(10-14). The alpha and beta chains form an alternating ring which encloses part of the gamma chain. F(1) is attached to F(0) by a central stalk formed by the gamma and epsilon chains, while a peripheral stalk is formed by the delta, b and b' chains.

It is found in the plastid. The protein localises to the chloroplast thylakoid membrane. Functionally, f(1)F(0) ATP synthase produces ATP from ADP in the presence of a proton or sodium gradient. F-type ATPases consist of two structural domains, F(1) containing the extramembraneous catalytic core and F(0) containing the membrane proton channel, linked together by a central stalk and a peripheral stalk. During catalysis, ATP synthesis in the catalytic domain of F(1) is coupled via a rotary mechanism of the central stalk subunits to proton translocation. Component of the F(0) channel, it forms part of the peripheral stalk, linking F(1) to F(0). This Acorus calamus (Sweet flag) protein is ATP synthase subunit b, chloroplastic.